We begin with the raw amino-acid sequence, 161 residues long: Nucleotide-binding protein PputW619_0959 (161 aa).

This sequence belongs to the YajQ family.

Functionally, nucleotide-binding protein. This chain is Nucleotide-binding protein PputW619_0959, found in Pseudomonas putida (strain W619).